Here is a 317-residue protein sequence, read N- to C-terminus: 3'-5' exoribonuclease YhaM (317 aa).

The segment at residues 17–90 (FLLIKESTRG…QLKILSIRLS (74 aa)) is a DNA-binding region (OB). The HD domain occupies 163–279 (HVVSMLAIGK…LHLIDLIDAK (117 aa)).

The protein belongs to the YhaM family.

In terms of biological role, shows a 3'-5' exoribonuclease activity. The polypeptide is 3'-5' exoribonuclease YhaM (Oceanobacillus iheyensis (strain DSM 14371 / CIP 107618 / JCM 11309 / KCTC 3954 / HTE831)).